The following is a 712-amino-acid chain: Origin recognition complex subunit 3 (712 aa).

Phosphoserine occurs at positions 23 and 516.

Belongs to the ORC3 family. Component of ORC, a complex composed of at least 6 subunits: ORC1, ORC2, ORC3, ORC4, ORC5 and ORC6. ORC is regulated in a cell-cycle dependent manner. It is sequentially assembled at the exit from anaphase of mitosis and disassembled as cells enter S phase. In terms of processing, multi-mono-ubiquitinated by OBI1; ubiquitination is important for efficient DNA replication origin site activation. Ubiquitination levels are low in mitotic and early G1-phAse cells and are induced in late G1-/early S-phase, peaking in S-phase and decrease toward the end of the cell cycle.

It localises to the nucleus. The protein resides in the chromosome. Functionally, component of the origin recognition complex (ORC) that binds origins of replication. DNA-binding is ATP-dependent. The specific DNA sequences that define origins of replication have not been identified yet. ORC is required to assemble the pre-replication complex necessary to initiate DNA replication. Binds histone H3 and H4 trimethylation marks H3K9me3, H3K27me3 and H4K20me3. The sequence is that of Origin recognition complex subunit 3 (ORC3) from Bos taurus (Bovine).